The chain runs to 55 residues: Large ribosomal subunit protein bL33 (55 aa).

It belongs to the bacterial ribosomal protein bL33 family.

This Rhizorhabdus wittichii (strain DSM 6014 / CCUG 31198 / JCM 15750 / NBRC 105917 / EY 4224 / RW1) (Sphingomonas wittichii) protein is Large ribosomal subunit protein bL33.